Here is a 240-residue protein sequence, read N- to C-terminus: Expansin-A20 (240 aa).

An N-terminal signal peptide occupies residues 1–21 (MGNILLQLLAVVALCIAPARS). The Expansin-like EG45 domain maps to 41–145 (GGACGYGNLY…QQVKCWRYGG (105 aa)). Residues Asn107 and Asn207 are each glycosylated (N-linked (GlcNAc...) asparagine). In terms of domain architecture, Expansin-like CBD spans 155–234 (YFELVLVTNM…GWSFGQTFST (80 aa)).

The protein belongs to the expansin family. Expansin A subfamily.

It is found in the secreted. Its subcellular location is the cell wall. The protein localises to the membrane. May cause loosening and extension of plant cell walls by disrupting non-covalent bonding between cellulose microfibrils and matrix glucans. No enzymatic activity has been found. May be required for rapid internodal elongation in deepwater rice during submergence. This Oryza sativa subsp. japonica (Rice) protein is Expansin-A20 (EXPA20).